Consider the following 237-residue polypeptide: NAD(P)H-quinone oxidoreductase subunit K, chloroplastic (237 aa).

Cys55, Cys56, Cys120, and Cys151 together coordinate [4Fe-4S] cluster.

Belongs to the complex I 20 kDa subunit family. NDH is composed of at least 16 different subunits, 5 of which are encoded in the nucleus. It depends on [4Fe-4S] cluster as a cofactor.

It is found in the plastid. The protein localises to the chloroplast thylakoid membrane. It catalyses the reaction a plastoquinone + NADH + (n+1) H(+)(in) = a plastoquinol + NAD(+) + n H(+)(out). The enzyme catalyses a plastoquinone + NADPH + (n+1) H(+)(in) = a plastoquinol + NADP(+) + n H(+)(out). Functionally, NDH shuttles electrons from NAD(P)H:plastoquinone, via FMN and iron-sulfur (Fe-S) centers, to quinones in the photosynthetic chain and possibly in a chloroplast respiratory chain. The immediate electron acceptor for the enzyme in this species is believed to be plastoquinone. Couples the redox reaction to proton translocation, and thus conserves the redox energy in a proton gradient. The sequence is that of NAD(P)H-quinone oxidoreductase subunit K, chloroplastic from Nephroselmis olivacea (Green alga).